A 366-amino-acid polypeptide reads, in one-letter code: tRNA/tmRNA (uracil-C(5))-methyltransferase (366 aa).

Glutamine 190, tyrosine 218, asparagine 223, glutamate 239, and aspartate 299 together coordinate S-adenosyl-L-methionine. Cysteine 324 acts as the Nucleophile in catalysis. Glutamate 358 functions as the Proton acceptor in the catalytic mechanism.

It belongs to the class I-like SAM-binding methyltransferase superfamily. RNA M5U methyltransferase family. TrmA subfamily.

The enzyme catalyses uridine(54) in tRNA + S-adenosyl-L-methionine = 5-methyluridine(54) in tRNA + S-adenosyl-L-homocysteine + H(+). It carries out the reaction uridine(341) in tmRNA + S-adenosyl-L-methionine = 5-methyluridine(341) in tmRNA + S-adenosyl-L-homocysteine + H(+). Functionally, dual-specificity methyltransferase that catalyzes the formation of 5-methyluridine at position 54 (m5U54) in all tRNAs, and that of position 341 (m5U341) in tmRNA (transfer-mRNA). The protein is tRNA/tmRNA (uracil-C(5))-methyltransferase of Escherichia coli O7:K1 (strain IAI39 / ExPEC).